We begin with the raw amino-acid sequence, 223 residues long: Ion-translocating oxidoreductase complex subunit E (223 aa).

The next 6 membrane-spanning stretches (helical) occupy residues 17–37 (NGVLCMLLGMCPTMAMTGTAT), 40–60 (LGMGLATAAVMAASNLMVAMF), 70–90 (IPVYILIVAANVTFVDLGMNA), 94–114 (ELYKVLGLFIPLIVSNCLPLA), 129–149 (FLDGLFMGLGFTLALTAIGAV), and 182–202 (WGILVLILPPGGFLIAGLMVV).

Belongs to the NqrDE/RnfAE family. The complex is composed of six subunits: RnfA, RnfB, RnfC, RnfD, RnfE and RnfG.

It is found in the cell inner membrane. Its function is as follows. Part of a membrane-bound complex that couples electron transfer with translocation of ions across the membrane. This Paramagnetospirillum magneticum (strain ATCC 700264 / AMB-1) (Magnetospirillum magneticum) protein is Ion-translocating oxidoreductase complex subunit E.